We begin with the raw amino-acid sequence, 477 residues long: Cytochrome P450 716A1 (477 aa).

The helical transmembrane segment at 2–22 threads the bilayer; it reads YMAIMIILFLSSILLSLLLLL. Cys424 is a heme binding site.

Belongs to the cytochrome P450 family. Heme serves as cofactor.

It is found in the membrane. In terms of biological role, possesses triterpene oxidizing activity. Catalyzes the C28 hydroxylation of alpha-amyrin, beta-amyrin, and lupeol, producing uvaol, erythrodiol, and betulin, respectively. Catalyzes the C28 carboxylation of alpha- and beta-amyrin. The polypeptide is Cytochrome P450 716A1 (Arabidopsis thaliana (Mouse-ear cress)).